A 330-amino-acid polypeptide reads, in one-letter code: GMP reductase (330 aa).

The active-site Thioimidate intermediate is cysteine 180. 209 to 232 serves as a coordination point for NADP(+); sequence LIADGGIRHNGDIAKSVRFGASMV.

Belongs to the IMPDH/GMPR family. GuaC type 2 subfamily.

It carries out the reaction IMP + NH4(+) + NADP(+) = GMP + NADPH + 2 H(+). Functionally, catalyzes the irreversible NADPH-dependent deamination of GMP to IMP. It functions in the conversion of nucleobase, nucleoside and nucleotide derivatives of G to A nucleotides, and in maintaining the intracellular balance of A and G nucleotides. This is GMP reductase from Lactobacillus johnsonii (strain CNCM I-12250 / La1 / NCC 533).